The chain runs to 838 residues: U1 SNP1-associating protein 1 (838 aa).

The Cytoplasmic portion of the chain corresponds to 1 to 536 (MSEYLAQTPC…VRPLRNSFPL (536 aa)). Residues 31-240 (HPLSTVGRLL…DFAPAHNSFF (210 aa)) are required for ERAD-L function. Positions 259–318 (ERFVLEFISDATLSITQMNVKPDTTVKQVKDFICSVYTHSLNLRRNDIKLIYKGQLLHEN) constitute a Ubiquitin-like domain. Residues 319–418 (NFAGNSSKIS…VPTDELYRKC (100 aa)) form an important for HRD1 oligomer formation region. Residues 345-535 (QEYTESGPGF…VVRPLRNSFP (191 aa)) are interaction with HRD1. Phosphoserine occurs at positions 374, 376, and 379. A required for ERAD-L function and HRD1 oligomer formation region spans residues 437 to 490 (SSYLSVIKGDYGEIKIPISSNDYRINGDNILLSPSAIEQLESALNFKIERPRDS). The helical transmembrane segment at 537–559 (LLVLIRTFYLIGYNSLVPFFIIL) threads the bilayer. Topologically, residues 560 to 563 (EFGS) are extracellular. The helical transmembrane segment at 564–583 (FLPWKYIILLSLLFIFRTVW) threads the bilayer. Over 584–838 (NTQEVWNLWR…QPHLYIPDED (255 aa)) the chain is Cytoplasmic. Residues 584–838 (NTQEVWNLWR…QPHLYIPDED (255 aa)) are interaction with DER1. Positions 795–838 (ARDREQPAPSAQQQENEDEALIIPDEEEPTATGAQPHLYIPDED) are disordered. A compositionally biased stretch (acidic residues) spans 809-823 (ENEDEALIIPDEEEP).

In terms of assembly, component of the HRD1 ubiquitin ligase complex which contains the E3 ligase HRD1, its cofactors HRD3, USA1 and DER1, substrate recruiting factor YOS9 and CDC48-binding protein UBX2. Within the complex, interacts directly with HRD1 (via N-terminus) and DER1 (via C-terminus) and indirectly with HRD3. In ERAD-L, HRD3 and YOS9 jointly bind misfolded glycoproteins in the endoplasmic reticulum (ER) lumen. Movement of ERAD-L substrates through the ER membrane is facilitated by HRD1 and DER1 which have lateral gates facing each other and which distort the membrane region between the lateral gates, making it much thinner than a normal phospholipid bilayer. Substrates insert into the membrane as a hairpin loop with one strand interacting with DER1 and the other with HRD1. The HRD1 complex interacts with the heterotrimeric CDC48-NPL4-UFD1 ATPase complex which is recruited by UBX2 via its interaction with CDC48 and which moves ubiquitinated substrates to the cytosol for targeting to the proteasome.

Its subcellular location is the endoplasmic reticulum membrane. Scaffold protein of the endoplasmic reticulum-associated degradation (ERAD) (also known as endoplasmic reticulum quality control, ERQC) pathway involved in ubiquitin-dependent degradation of misfolded endoplasmic reticulum proteins. Component of the HRD1 ubiquitin ligase complex, which is part of the ERAD-L and ERAD-M pathways responsible for the rapid degradation of soluble lumenal and membrane proteins with misfolded lumenal domains (ERAD-L), or ER-membrane proteins with misfolded transmembrane domains (ERAD-M). Has multiple functions in ERAD including recruitment of DER1 to the HRD1 ubiquitin ligase, and regulation of HRD1 activity. Involved in oligomerization of HRD1 and in HRD1 autoubiquitination and degradation. The chain is U1 SNP1-associating protein 1 (USA1) from Saccharomyces cerevisiae (strain ATCC 204508 / S288c) (Baker's yeast).